Here is a 204-residue protein sequence, read N- to C-terminus: Thiamine-phosphate synthase (204 aa).

4-amino-2-methyl-5-(diphosphooxymethyl)pyrimidine contacts are provided by residues 32–36 (QLRMK) and Asp64. The Mg(2+) site is built by Asp65 and Asp84. Thr103 contacts 4-amino-2-methyl-5-(diphosphooxymethyl)pyrimidine. 129-131 (TTT) contributes to the 2-[(2R,5Z)-2-carboxy-4-methylthiazol-5(2H)-ylidene]ethyl phosphate binding site. Lys132 provides a ligand contact to 4-amino-2-methyl-5-(diphosphooxymethyl)pyrimidine. A 2-[(2R,5Z)-2-carboxy-4-methylthiazol-5(2H)-ylidene]ethyl phosphate-binding site is contributed by Gly165.

Belongs to the thiamine-phosphate synthase family. Requires Mg(2+) as cofactor.

The catalysed reaction is 2-[(2R,5Z)-2-carboxy-4-methylthiazol-5(2H)-ylidene]ethyl phosphate + 4-amino-2-methyl-5-(diphosphooxymethyl)pyrimidine + 2 H(+) = thiamine phosphate + CO2 + diphosphate. The enzyme catalyses 2-(2-carboxy-4-methylthiazol-5-yl)ethyl phosphate + 4-amino-2-methyl-5-(diphosphooxymethyl)pyrimidine + 2 H(+) = thiamine phosphate + CO2 + diphosphate. It carries out the reaction 4-methyl-5-(2-phosphooxyethyl)-thiazole + 4-amino-2-methyl-5-(diphosphooxymethyl)pyrimidine + H(+) = thiamine phosphate + diphosphate. The protein operates within cofactor biosynthesis; thiamine diphosphate biosynthesis; thiamine phosphate from 4-amino-2-methyl-5-diphosphomethylpyrimidine and 4-methyl-5-(2-phosphoethyl)-thiazole: step 1/1. Condenses 4-methyl-5-(beta-hydroxyethyl)thiazole monophosphate (THZ-P) and 2-methyl-4-amino-5-hydroxymethyl pyrimidine pyrophosphate (HMP-PP) to form thiamine monophosphate (TMP). This chain is Thiamine-phosphate synthase, found in Bacteroides fragilis (strain YCH46).